Here is a 136-residue protein sequence, read N- to C-terminus: Large ribosomal subunit protein uL16c (136 aa).

The interval 1-20 is disordered; that stretch reads MLSPKRTRFRKQHRGRMKGK.

It belongs to the universal ribosomal protein uL16 family. As to quaternary structure, part of the 50S ribosomal subunit.

The protein resides in the plastid. It is found in the chloroplast. This Lolium perenne (Perennial ryegrass) protein is Large ribosomal subunit protein uL16c.